Here is a 361-residue protein sequence, read N- to C-terminus: MLYHVFYCLSSIFTPFNIFQYITFRAGGAILTSLLICFVAGPCIIEKLENFKIKQIVRTDGPETHLSKNGTPTMGGLLILLSVVASTFLWARLDNRFILWLLTGTLWLGFLGFCDDYLKLKKRDSNGLSAKSKIFGQTVFAAVLAAYLNFFPSNPEFATLVNVPFLKGFFINFSFLYALFVIIVIVGSSNAVNLTDGLDGLAIGNITIVAFSLTLFAYFAGHFQIANYLKIINVSGAGEISIFLFAVVGSSLGFLWYNSHPAEIFMGDTGSLFLGGVLGMVSLFIKQELVLVLLGGVFVIEALSVLIQIFYYRRTGKKVFKMSPLHHHYEMLGLSEMKVTVRFWIAGVILAILSFASLKVR.

Transmembrane regions (helical) follow at residues Ala26–Glu46, Thr71–Ala91, Phe97–Tyr117, Ile134–Asn154, Gly168–Ser188, Gly200–Ala220, Gly236–Trp256, Ile264–Phe284, Val290–Phe310, and Lys338–Leu358.

It belongs to the glycosyltransferase 4 family. MraY subfamily. Mg(2+) serves as cofactor.

It localises to the cell membrane. The catalysed reaction is UDP-N-acetyl-alpha-D-muramoyl-L-alanyl-gamma-D-glutamyl-meso-2,6-diaminopimeloyl-D-alanyl-D-alanine + di-trans,octa-cis-undecaprenyl phosphate = di-trans,octa-cis-undecaprenyl diphospho-N-acetyl-alpha-D-muramoyl-L-alanyl-D-glutamyl-meso-2,6-diaminopimeloyl-D-alanyl-D-alanine + UMP. The protein operates within cell wall biogenesis; peptidoglycan biosynthesis. Functionally, catalyzes the initial step of the lipid cycle reactions in the biosynthesis of the cell wall peptidoglycan: transfers peptidoglycan precursor phospho-MurNAc-pentapeptide from UDP-MurNAc-pentapeptide onto the lipid carrier undecaprenyl phosphate, yielding undecaprenyl-pyrophosphoryl-MurNAc-pentapeptide, known as lipid I. The chain is Phospho-N-acetylmuramoyl-pentapeptide-transferase from Endomicrobium trichonymphae.